A 419-amino-acid polypeptide reads, in one-letter code: 3-isopropylmalate dehydratase large subunit (419 aa).

[4Fe-4S] cluster-binding residues include C300, C360, and C363.

Belongs to the aconitase/IPM isomerase family. LeuC type 2 subfamily. Heterodimer of LeuC and LeuD. The cofactor is [4Fe-4S] cluster.

It catalyses the reaction (2R,3S)-3-isopropylmalate = (2S)-2-isopropylmalate. Its pathway is amino-acid biosynthesis; L-leucine biosynthesis; L-leucine from 3-methyl-2-oxobutanoate: step 2/4. Functionally, catalyzes the isomerization between 2-isopropylmalate and 3-isopropylmalate, via the formation of 2-isopropylmaleate. In Desulfatibacillum aliphaticivorans, this protein is 3-isopropylmalate dehydratase large subunit.